Consider the following 465-residue polypeptide: FAD-dependent oxidoreductase pigF (465 aa).

Residues 1–17 (MMLLTLLILSSVGLAAA) form the signal peptide. N95, N138, N260, and N327 each carry an N-linked (GlcNAc...) asparagine glycan. D444 carries GPI-anchor amidated aspartate lipidation. Positions 445-465 (SASGIWNLTNAVVLPGLLTGL) are cleaved as a propeptide — removed in mature form. Residue N451 is glycosylated (N-linked (GlcNAc...) asparagine).

Belongs to the beta-cyclopiazonate dehydrogenase family. FAD is required as a cofactor.

It is found in the cell membrane. It functions in the pathway secondary metabolite biosynthesis. Functionally, FAD-dependent oxidoreductase; part of the gene cluster that mediates the biosynthesis of azaphilone pigments (MonAzPs), a complex mixture of compounds with a common azaphilone skeleton very widely used as food colorants. Within the pathway, pigF desaturates C6(7) to afford the orange and red pigments from yellow pigments. The first step of the pathway is performed by the nrPKS pigA that forms the hexaketide precursor from successive condensations of five malonyl-CoA units, with a simple acetyl-CoA starter unit. The role of esterase pigG is not clear, but it may play at most a supplementary role in the formation of the benzaldehyde produced by the pigA nrPKS. This very reactive benzaldehyde is intercepted by the pigC ketoreductase that to provide the first stable enzyme-free MonAzPs intermediate, 6-(4-hydroxy-2-oxopentyl)-3-methyl-2,4-dioxocyclohexane carbaldehyde, also known as M7PKS-1. The FAD-dependent monooxygenase pigN hydroxylates M7PKS-1 at C-4, which triggers the formation of the pyran ring. PigJ, pigK and pigD are involved in the acetylation of the pyran ring. PigJ and pigK form the two subunits of a dedicated fungal FAS that produces the side chain fatty acyl moiety of MonAzPs and pigD transfers the fatty acyl chain to the C-4 alcohol. PigM and pigO are involved in the elimination of the omega-1 alcohol. PigM acts as an O-acetyltransferase that synthesizes the putative O-11 acetyl intermediate whereas pigO eliminates acetic acid to yield an intermediate with a C10(11) double bond. The dehydration of the C-11 alcohol followed by the reduction of the C6(7) double bond by the NAD(P)H-dependent oxidoreductase pigE increases the electrophilicity of the C-5 ketone of the resulting acyl benzopyran. This in turn sets up the C-5 ketone for an intramolecular Knoevenagel aldol condensation with the C-20 enol of the side chain. This condensation affords the characteristic linear tricyclic carbon skeletons of the yellow pigments that serve as the common precursors for the classical yellow pigments monascin and ankaflavin, orange pigments rubopunctatin and monascorubrin, and red pigments ribropunctamine and monascorubramine. The FAD-dependent oxidoreductase pigF is especially invoved in the biosynthesis of orange and red pigments via desaturation of C6(7). The sequence is that of FAD-dependent oxidoreductase pigF from Monascus ruber (Mold).